A 93-amino-acid chain; its full sequence is DNA-directed RNA polymerase subunit omega (93 aa).

The protein belongs to the RNA polymerase subunit omega family. As to quaternary structure, the RNAP catalytic core consists of 2 alpha, 1 beta, 1 beta' and 1 omega subunit. When a sigma factor is associated with the core the holoenzyme is formed, which can initiate transcription.

It catalyses the reaction RNA(n) + a ribonucleoside 5'-triphosphate = RNA(n+1) + diphosphate. Functionally, promotes RNA polymerase assembly. Latches the N- and C-terminal regions of the beta' subunit thereby facilitating its interaction with the beta and alpha subunits. This is DNA-directed RNA polymerase subunit omega from Acinetobacter baylyi (strain ATCC 33305 / BD413 / ADP1).